Consider the following 211-residue polypeptide: tRNA (guanine-N(7)-)-methyltransferase (211 aa).

The S-adenosyl-L-methionine site is built by E44, D69, D96, and D118. D118 is a catalytic residue. Position 122 (K122) interacts with substrate. Residues 124 to 129 (RHEKRR) are interaction with RNA. Substrate contacts are provided by residues D154 and 191–194 (TEYE).

The protein belongs to the class I-like SAM-binding methyltransferase superfamily. TrmB family.

It catalyses the reaction guanosine(46) in tRNA + S-adenosyl-L-methionine = N(7)-methylguanosine(46) in tRNA + S-adenosyl-L-homocysteine. The protein operates within tRNA modification; N(7)-methylguanine-tRNA biosynthesis. In terms of biological role, catalyzes the formation of N(7)-methylguanine at position 46 (m7G46) in tRNA. The sequence is that of tRNA (guanine-N(7)-)-methyltransferase from Streptococcus equi subsp. equi (strain 4047).